The following is a 249-amino-acid chain: Adenylate kinase (249 aa).

Position 43 to 48 (glycine 43 to threonine 48) interacts with ATP. An NMP region spans residues alanine 63–valine 92. AMP is bound by residues threonine 64, arginine 69, glycine 90–valine 92, glycine 119–arginine 122, and glutamine 126. An LID region spans residues glycine 160–aspartate 197. ATP is bound by residues arginine 161 and serine 170–tyrosine 171. Residues arginine 194 and arginine 205 each contribute to the AMP site. Residue glutamine 233 participates in ATP binding.

It belongs to the adenylate kinase family. AK2 subfamily. As to quaternary structure, monomer.

It is found in the cytoplasm. Its subcellular location is the cytosol. The protein localises to the mitochondrion intermembrane space. It carries out the reaction AMP + ATP = 2 ADP. Catalyzes the reversible transfer of the terminal phosphate group between ATP and AMP. Plays an important role in cellular energy homeostasis and in adenine nucleotide metabolism. Adenylate kinase activity is critical for regulation of the phosphate utilization and the AMP de novo biosynthesis pathways. This chain is Adenylate kinase, found in Scheffersomyces stipitis (strain ATCC 58785 / CBS 6054 / NBRC 10063 / NRRL Y-11545) (Yeast).